The following is a 137-amino-acid chain: Small ribosomal subunit protein bS6 (137 aa).

It belongs to the bacterial ribosomal protein bS6 family.

Its function is as follows. Binds together with bS18 to 16S ribosomal RNA. In Sulfurimonas denitrificans (strain ATCC 33889 / DSM 1251) (Thiomicrospira denitrificans (strain ATCC 33889 / DSM 1251)), this protein is Small ribosomal subunit protein bS6.